We begin with the raw amino-acid sequence, 557 residues long: Dihydroxy-acid dehydratase (557 aa).

Residue Asp-78 participates in Mg(2+) binding. Position 119 (Cys-119) interacts with [2Fe-2S] cluster. Mg(2+)-binding residues include Asp-120 and Lys-121. Lys-121 carries the N6-carboxylysine modification. A [2Fe-2S] cluster-binding site is contributed by Cys-192. Glu-442 serves as a coordination point for Mg(2+). Ser-468 acts as the Proton acceptor in catalysis.

The protein belongs to the IlvD/Edd family. Homodimer. It depends on [2Fe-2S] cluster as a cofactor. Mg(2+) serves as cofactor.

It carries out the reaction (2R)-2,3-dihydroxy-3-methylbutanoate = 3-methyl-2-oxobutanoate + H2O. The catalysed reaction is (2R,3R)-2,3-dihydroxy-3-methylpentanoate = (S)-3-methyl-2-oxopentanoate + H2O. It functions in the pathway amino-acid biosynthesis; L-isoleucine biosynthesis; L-isoleucine from 2-oxobutanoate: step 3/4. It participates in amino-acid biosynthesis; L-valine biosynthesis; L-valine from pyruvate: step 3/4. Functionally, functions in the biosynthesis of branched-chain amino acids. Catalyzes the dehydration of (2R,3R)-2,3-dihydroxy-3-methylpentanoate (2,3-dihydroxy-3-methylvalerate) into 2-oxo-3-methylpentanoate (2-oxo-3-methylvalerate) and of (2R)-2,3-dihydroxy-3-methylbutanoate (2,3-dihydroxyisovalerate) into 2-oxo-3-methylbutanoate (2-oxoisovalerate), the penultimate precursor to L-isoleucine and L-valine, respectively. The sequence is that of Dihydroxy-acid dehydratase from Bacillus cereus (strain ATCC 10987 / NRS 248).